Here is a 528-residue protein sequence, read N- to C-terminus: GMP synthase [glutamine-hydrolyzing] (528 aa).

One can recognise a Glutamine amidotransferase type-1 domain in the interval 13–204; sequence AIVILDFGSQ…VYHICGCEPD (192 aa). Cys90 serves as the catalytic Nucleophile. Catalysis depends on residues His178 and Glu180. Positions 205–403 constitute a GMPS ATP-PPase domain; the sequence is WTTEAFIDEA…LGLPEEIVSR (199 aa). ATP is bound at residue 232–238; sequence SGGVDSS.

In terms of assembly, homodimer.

The catalysed reaction is XMP + L-glutamine + ATP + H2O = GMP + L-glutamate + AMP + diphosphate + 2 H(+). The protein operates within purine metabolism; GMP biosynthesis; GMP from XMP (L-Gln route): step 1/1. Its function is as follows. Catalyzes the synthesis of GMP from XMP. The protein is GMP synthase [glutamine-hydrolyzing] of Synechococcus sp. (strain CC9311).